A 413-amino-acid polypeptide reads, in one-letter code: MQAEIIAVGTEILMGQITNTNGAYMAKQLTALGIDSYHQQVVGDNGPRLEEAIKLAESRSNLVILIGGLGPTPDDLTKQTLAAHLNRKLVEDPDAMAKLQARVKQQQRPMTPNNQLQAMYPEGADILVNRVGLAVGAWIVNGQHTYVLLPGPPKEFVPMVDHELLPRLAKWSGHAEIMVSRVLRFFGIGESQLVTDLDDLIANQTDPTIATYIKDHEVTVRVTASGATEKDADAKLEPMIGAIMDRDGQYFYGYGDDNSLAKELVKTLAANDMQITAAESLTAGAFQAALGDVPGVSTYFKGGFVTYSLATKAAFLAIDARELAAHGVVSAFTAKAMAEHARRKAAADISVSFTGVAGPDTLEGQPAGTVWIGLARRGQLPEAHVYHFPGGRNDVRQRAVMTGMMLALRALQA.

It belongs to the CinA family.

The protein is Putative competence-damage inducible protein of Lacticaseibacillus casei (strain BL23) (Lactobacillus casei).